Reading from the N-terminus, the 231-residue chain is Transmembrane gamma-carboxyglutamic acid protein 3 (231 aa).

Residues 1 to 19 (MAVFLEAKNAHAVLKRFPR) constitute a propeptide that is removed on maturation. The 46-residue stretch at 20–65 (ANEFLEELRQGTIERECMEEICSYEEVKEVFENKEKTMEFWKGYPN) folds into the Gla domain. The Extracellular portion of the chain corresponds to 20–78 (ANEFLEELRQGTIERECMEEICSYEEVKEVFENKEKTMEFWKGYPNAVYSVRDPSQSSD). Glu22, Glu25, Glu26, Glu33, Glu35, Glu38, Glu39, Glu44, Glu45, Glu48, Glu51, Glu54, and Glu58 each carry 4-carboxyglutamate. Cys36 and Cys41 are disulfide-bonded. The chain crosses the membrane as a helical span at residues 79 to 101 (AMYVVVPLLGVVLLIVIALFIIW). Residues 102–231 (RCQLQKATRH…IVAASPSADK (130 aa)) lie on the Cytoplasmic side of the membrane. Disordered stretches follow at residues 140–165 (HSQGESSGHREAGNNPQIVMGPSRGG) and 184–231 (RLSS…SADK). The span at 201–212 (QEGSSEEASVSY) shows a compositional bias: polar residues.

Post-translationally, gla residues are produced after subsequent post-translational modifications of glutamate by a vitamin K-dependent gamma-carboxylase.

The protein localises to the membrane. This chain is Transmembrane gamma-carboxyglutamic acid protein 3 (Prrg3), found in Mus musculus (Mouse).